Consider the following 76-residue polypeptide: uncharacterized protein (76 aa).

Residues 27–76 (SINNGEGSSVVHRDATAPPTPPVVPTSTLQVPGLQRARTPEPNDPRVANL) are disordered.

This is an uncharacterized protein from Caenorhabditis elegans.